Here is a 329-residue protein sequence, read N- to C-terminus: Olfactory receptor 5AL1 (329 aa).

The Extracellular segment spans residues 1-44; sequence MCALKGFLEENFYTYSVAKGNHSTVYEFILLGLTDNAELQVTLF. Asn21 carries an N-linked (GlcNAc...) asparagine glycan. The helical transmembrane segment at 45–65 threads the bilayer; the sequence is GIFLVVYLASFMGNFGLIMLI. The Cytoplasmic segment spans residues 66–73; it reads QISPQLHT. Residues 74–94 traverse the membrane as a helical segment; sequence PMYFFLSHLAFVDFSFTSSVA. Over 95-113 the chain is Extracellular; it reads PNTLVNFLCEVKSITFYAC. An intrachain disulfide couples Cys113 to Cys205. A helical membrane pass occupies residues 114–134; sequence AIQVCCFITFVVCELYLLSIM. At 135–157 the chain is on the cytoplasmic side; it reads AYDRYVAICNPLLYVILIPRKLC. The chain crosses the membrane as a helical span at residues 158–178; sequence IKLIASTYVYGFTVGLVQTVA. The Extracellular portion of the chain corresponds to 179–220; it reads TSYLSFCDSNVINHFYHDDVPLVALACSDTHVKELMLLIIAG. Residues 221 to 241 form a helical membrane-spanning segment; it reads FNTLCSLVIVLISYGFIFFAI. The Cytoplasmic segment spans residues 242-253; that stretch reads LRIHSAEGRQKA. Residues 254 to 274 form a helical membrane-spanning segment; the sequence is FSTSASHLTSITIFYGTIIFM. Residues 275–287 lie on the Extracellular side of the membrane; sequence YPQPKSSHSLNMD. Residues 288 to 308 form a helical membrane-spanning segment; the sequence is KVASVFNVVVIPTLNPLIYSL. The Cytoplasmic portion of the chain corresponds to 309–329; sequence RNQEVKNALKRIIEKLCLAVK.

The protein belongs to the G-protein coupled receptor 1 family.

The protein resides in the cell membrane. Its function is as follows. Odorant receptor. This is Olfactory receptor 5AL1 (OR5AL1) from Homo sapiens (Human).